The primary structure comprises 459 residues: Trigger factor (459 aa).

The PPIase FKBP-type domain occupies 161–246 (GDKVVIDFQG…IKKIMEGKLP (86 aa)).

Belongs to the FKBP-type PPIase family. Tig subfamily.

It localises to the cytoplasm. It catalyses the reaction [protein]-peptidylproline (omega=180) = [protein]-peptidylproline (omega=0). Functionally, involved in protein export. Acts as a chaperone by maintaining the newly synthesized protein in an open conformation. Functions as a peptidyl-prolyl cis-trans isomerase. This chain is Trigger factor, found in Legionella pneumophila (strain Corby).